The primary structure comprises 247 residues: Carboxy-S-adenosyl-L-methionine synthase (247 aa).

Residues Y39, 64 to 66 (GCS), 89 to 90 (DN), 117 to 118 (DI), N132, and R199 each bind S-adenosyl-L-methionine.

This sequence belongs to the class I-like SAM-binding methyltransferase superfamily. Cx-SAM synthase family. As to quaternary structure, homodimer.

The enzyme catalyses prephenate + S-adenosyl-L-methionine = carboxy-S-adenosyl-L-methionine + 3-phenylpyruvate + H2O. Functionally, catalyzes the conversion of S-adenosyl-L-methionine (SAM) to carboxy-S-adenosyl-L-methionine (Cx-SAM). The protein is Carboxy-S-adenosyl-L-methionine synthase of Shigella sonnei (strain Ss046).